Reading from the N-terminus, the 524-residue chain is General transcription factor IIF subunit 1 (524 aa).

2 disordered regions span residues 56–76 (MYQE…RKQR) and 181–462 (RLKD…IQLT). Positions 242–257 (KPQKKVPAKGGKKKKR) are enriched in basic residues. Acidic residues predominate over residues 262 to 289 (EALEDSDDGDFEGQEVDYMSDESSSDEE). Basic and acidic residues predominate over residues 290 to 307 (LPGKIKPAKEEEGPKGLD). Acidic residues-rich tracts occupy residues 308–327 (EQSE…EEGE) and 347–358 (SDESETSEDSDI). Residues 368–378 (QKKKTPPKKDK) show a composition bias toward basic residues. The span at 381 to 397 (GSNSSSRGNSRPGTPSP) shows a compositional bias: low complexity. The span at 436–459 (PQNTSGKSTPQPQSGKSTPSSGDI) shows a compositional bias: polar residues.

The protein belongs to the TFIIF alpha subunit family. Heterodimer of an alpha and a beta subunit. Post-translationally, phosphorylated on Ser and other residues by TAF1 and casein kinase II-like kinases.

It localises to the nucleus. Its function is as follows. TFIIF is a general transcription initiation factor that binds to RNA polymerase II and helps to recruit it to the initiation complex in collaboration with TFIIB. It promotes transcription elongation. In Xenopus laevis (African clawed frog), this protein is General transcription factor IIF subunit 1 (gtf2f1).